The following is a 231-amino-acid chain: DNA damage response protein C (231 aa).

Homodimer.

It localises to the cytoplasm. Its subcellular location is the nucleoid. Functionally, appears to contribute to D.radiodurans capacity to survive exposure to ionizing radiation. Likely functions as a DNA damage-induced nucleoid-associated protein (NAP) that contributes to the enhanced level of nucleoid compaction after irradiation by bridging DNA duplexes, thereby limiting the dispersion of the fragmented genome immediately after irradiation to facilitate subsequent DNA repair. In vitro, binds both ssDNA and dsDNA, and is able to compact circular DNA, circularize linear DNA, anneal complementary DNA strands and protect DNA from nucleases. The chain is DNA damage response protein C from Deinococcus radiodurans (strain ATCC 13939 / DSM 20539 / JCM 16871 / CCUG 27074 / LMG 4051 / NBRC 15346 / NCIMB 9279 / VKM B-1422 / R1).